A 1900-amino-acid polypeptide reads, in one-letter code: Phosphatidylinositol 4-kinase STT4 (1900 aa).

Position 459 is a phosphoserine (Ser-459). One can recognise a PIK helical domain in the interval 1345-1530; it reads KIEGADSNEL…KPTLDRIRER (186 aa). The segment at 1531-1648 is pleckstrin homology (PH) domain conferring phosphoinositide binding specificity; the sequence is MVSSFSQSHR…EKWQAAIFKV (118 aa). In terms of domain architecture, PI3K/PI4K catalytic spans 1617–1884; the sequence is FMATFKIKKD…LIRKSYESIF (268 aa). A G-loop region spans residues 1623–1629; the sequence is IKKDVKD. Residues 1751-1759 are catalytic loop; the sequence is QFKDRHNGN. The segment at 1770–1794 is activation loop; it reads HIDFGFIFDIVPGGIKFEAVPFKLT.

It belongs to the PI3/PI4-kinase family. Type III PI4K subfamily.

It catalyses the reaction a 1,2-diacyl-sn-glycero-3-phospho-(1D-myo-inositol) + ATP = a 1,2-diacyl-sn-glycero-3-phospho-(1D-myo-inositol 4-phosphate) + ADP + H(+). In terms of biological role, acts on phosphatidylinositol (PI) in the first committed step in the production of the second messenger inositol 1,4,5,-trisphosphate. STT4 functions in PKC1 protein kinase pathway. This is Phosphatidylinositol 4-kinase STT4 (STT4) from Saccharomyces cerevisiae (strain ATCC 204508 / S288c) (Baker's yeast).